A 329-amino-acid polypeptide reads, in one-letter code: Beta-ketoacyl-[acyl-carrier-protein] synthase III (329 aa).

Active-site residues include Cys123 and His256. Positions 257–261 are ACP-binding; sequence QANIR. The active site involves Asn286.

It belongs to the thiolase-like superfamily. FabH family. In terms of assembly, homodimer.

It is found in the cytoplasm. The catalysed reaction is malonyl-[ACP] + acetyl-CoA + H(+) = 3-oxobutanoyl-[ACP] + CO2 + CoA. It participates in lipid metabolism; fatty acid biosynthesis. In terms of biological role, catalyzes the condensation reaction of fatty acid synthesis by the addition to an acyl acceptor of two carbons from malonyl-ACP. Catalyzes the first condensation reaction which initiates fatty acid synthesis and may therefore play a role in governing the total rate of fatty acid production. Possesses both acetoacetyl-ACP synthase and acetyl transacylase activities. Its substrate specificity determines the biosynthesis of branched-chain and/or straight-chain of fatty acids. The protein is Beta-ketoacyl-[acyl-carrier-protein] synthase III of Burkholderia lata (strain ATCC 17760 / DSM 23089 / LMG 22485 / NCIMB 9086 / R18194 / 383).